A 621-amino-acid chain; its full sequence is Hemolysin ahh1 (621 aa).

A signal peptide spans 1–30 (MKNKKPRKFITQAPTLSLLALALLAGSVQA). Positions 491 to 610 (RPVNLQLGGF…QNVSVRTLTS (120 aa)) constitute a Ricin B-type lectin domain.

It belongs to the HlyA hemolysin family.

Functionally, bacterial hemolysins are exotoxins that attack blood cell membranes and cause cell rupture by mechanisms not clearly defined. This is Hemolysin ahh1 (ahh1) from Aeromonas hydrophila subsp. hydrophila (strain ATCC 7966 / DSM 30187 / BCRC 13018 / CCUG 14551 / JCM 1027 / KCTC 2358 / NCIMB 9240 / NCTC 8049).